Consider the following 151-residue polypeptide: Transcription antitermination protein NusB (151 aa).

Belongs to the NusB family.

In terms of biological role, involved in transcription antitermination. Required for transcription of ribosomal RNA (rRNA) genes. Binds specifically to the boxA antiterminator sequence of the ribosomal RNA (rrn) operons. This Hamiltonella defensa subsp. Acyrthosiphon pisum (strain 5AT) protein is Transcription antitermination protein NusB.